Here is a 665-residue protein sequence, read N- to C-terminus: Zinc finger CCCH domain-containing protein 45 (665 aa).

The segment at M1 to G55 is disordered. Positions G33–H50 are enriched in gly residues. 3 consecutive C3H1-type zinc fingers follow at residues S58 to D85, K86 to D113, and D114 to L139. Residues H167–P256 form a disordered region. Residues N169–Q200 are compositionally biased toward polar residues. Positions Q205–Q238 are enriched in low complexity. A compositionally biased stretch (polar residues) spans S239 to R250. The YTH domain occupies S260–L395. A coiled-coil region spans residues D432–Q459. A compositionally biased stretch (acidic residues) spans N439 to N454. 2 disordered regions span residues N439–W469 and G561–R665. The span at G561 to G573 shows a compositional bias: gly residues. Basic and acidic residues predominate over residues T596–D623.

The chain is Zinc finger CCCH domain-containing protein 45 from Oryza sativa subsp. japonica (Rice).